Consider the following 227-residue polypeptide: Ribosomal RNA large subunit methyltransferase E (227 aa).

5 residues coordinate S-adenosyl-L-methionine: Gly78, Trp80, Asp103, Asp119, and Asp143. The Proton acceptor role is filled by Lys183.

It belongs to the class I-like SAM-binding methyltransferase superfamily. RNA methyltransferase RlmE family.

The protein resides in the cytoplasm. It carries out the reaction uridine(2552) in 23S rRNA + S-adenosyl-L-methionine = 2'-O-methyluridine(2552) in 23S rRNA + S-adenosyl-L-homocysteine + H(+). Functionally, specifically methylates the uridine in position 2552 of 23S rRNA at the 2'-O position of the ribose in the fully assembled 50S ribosomal subunit. The sequence is that of Ribosomal RNA large subunit methyltransferase E from Rickettsia typhi (strain ATCC VR-144 / Wilmington).